Consider the following 427-residue polypeptide: Phosphatidate cytidylyltransferase, mitochondrial (427 aa).

The span at 94-106 (YNRNGDGSTSTEN) shows a compositional bias: polar residues. The segment at 94 to 113 (YNRNGDGSTSTENPSKKEEQ) is disordered.

This sequence belongs to the TAM41 family. Mg(2+) serves as cofactor.

It localises to the mitochondrion inner membrane. The enzyme catalyses a 1,2-diacyl-sn-glycero-3-phosphate + CTP + H(+) = a CDP-1,2-diacyl-sn-glycerol + diphosphate. Its pathway is phospholipid metabolism; CDP-diacylglycerol biosynthesis; CDP-diacylglycerol from sn-glycerol 3-phosphate: step 3/3. In terms of biological role, catalyzes the formation of CDP-diacylglycerol (CDP-DAG) from phosphatidic acid (PA) in the mitochondrial inner membrane. Required for the biosynthesis of the dimeric phospholipid cardiolipin, which stabilizes supercomplexes of the mitochondrial respiratory chain in the mitochondrial inner membrane. This Dictyostelium discoideum (Social amoeba) protein is Phosphatidate cytidylyltransferase, mitochondrial.